We begin with the raw amino-acid sequence, 136 residues long: MERVERIIEFEIARINSHLPRARKSLKDLLNMEEPMITLRDGSVHYFKRQELELLASLLDEEEIAMLRLPMVLEISTVERDKIIIRGKVEAKVIRKILGFEEAIIEEPILKLPRYYLPKIRRILPTTTVHAFIVEW.

The protein belongs to the UPF0216 family.

In Pyrococcus abyssi (strain GE5 / Orsay), this protein is UPF0216 protein PYRAB16100.